The following is a 121-amino-acid chain: Darcynin homolog (121 aa).

It belongs to the darcynin family.

In Streptomyces avermitilis (strain ATCC 31267 / DSM 46492 / JCM 5070 / NBRC 14893 / NCIMB 12804 / NRRL 8165 / MA-4680), this protein is Darcynin homolog.